The sequence spans 377 residues: F-box protein At4g00755 (377 aa).

Residues 7 to 47 (LDTDTSLSILSCLDDPSDIVRASAVSRSWRQFVVKYSLSKN) form the F-box domain.

The chain is F-box protein At4g00755 from Arabidopsis thaliana (Mouse-ear cress).